The following is a 638-amino-acid chain: Chaperone protein DnaK 2 (638 aa).

Phosphothreonine; by autocatalysis is present on threonine 199. Residues 604–626 (AKEQAQSAPEGAQEADAAPADDV) are disordered. Over residues 613–624 (EGAQEADAAPAD) the composition is skewed to low complexity.

It belongs to the heat shock protein 70 family.

Functionally, acts as a chaperone. The protein is Chaperone protein DnaK 2 of Colwellia psychrerythraea (strain 34H / ATCC BAA-681) (Vibrio psychroerythus).